The chain runs to 314 residues: Putative peptide transport system permease protein BRA1092/BS1330_II1084 (314 aa).

The next 6 helical transmembrane spans lie at 12 to 32 (AIPV…LLPG), 101 to 121 (LALL…VVAA), 135 to 155 (LALL…VILF), 177 to 197 (WLRS…GYLA), 237 to 257 (VSVL…SVVI), and 286 to 306 (MLFL…LYTI). Positions 95 to 304 (LPVTISLALL…AINVLVDILY (210 aa)) constitute an ABC transmembrane type-1 domain.

It belongs to the binding-protein-dependent transport system permease family. The complex is composed of two ATP-binding proteins (BRA1094), two transmembrane proteins (BRA1092 and BRA1093) and a solute-binding protein (BRA1090).

Its subcellular location is the cell inner membrane. In terms of biological role, probably part of an ABC transporter complex that could be involved in peptide import. Probably responsible for the translocation of the substrate across the membrane. In Brucella suis biovar 1 (strain 1330), this protein is Putative peptide transport system permease protein BRA1092/BS1330_II1084.